The primary structure comprises 30 residues: MRTGKQYLKSLNDGRTVILDGEVVGNVLXH.

As to quaternary structure, homotrimer. The cofactor is FAD.

The catalysed reaction is pyrrole-2-carboxylate + NADH + O2 + H(+) = 5-hydroxypyrrole-2-carboxylate + NAD(+) + H2O. In terms of biological role, monooxygenase that initiates the degradation of pyrrole-2-carboxylate, which allows Arthrobacter sp. strain Py1 to grow on pyrrole-2-carboxylate as sole carbon, nitrogen, and energy source. To a lesser extent, can also use pyrrole, pyrrole-2-aldehyde, and indole-2-carboxylate as substrate. The protein is Pyrrole-2-carboxylate oxygenase of Arthrobacter sp. (strain Py1).